We begin with the raw amino-acid sequence, 384 residues long: Large ribosomal subunit protein uL3m (384 aa).

Disordered regions lie at residues 80–101 and 237–262; these read NQVT…KRRE and QEAS…SGSR. Residues 240–249 are compositionally biased toward polar residues; it reads SHGNSLNHRT.

It belongs to the universal ribosomal protein uL3 family. In terms of assembly, component of the mitochondrial large ribosomal subunit (mt-LSU). Mature N.crassa 74S mitochondrial ribosomes consist of a small (37S) and a large (54S) subunit. The 37S small subunit contains a 16S ribosomal RNA (16S mt-rRNA) and 32 different proteins. The 54S large subunit contains a 23S rRNA (23S mt-rRNA) and 42 different proteins.

Its subcellular location is the mitochondrion. Functionally, component of the mitochondrial ribosome (mitoribosome), a dedicated translation machinery responsible for the synthesis of mitochondrial genome-encoded proteins, including at least some of the essential transmembrane subunits of the mitochondrial respiratory chain. The mitoribosomes are attached to the mitochondrial inner membrane and translation products are cotranslationally integrated into the membrane. The chain is Large ribosomal subunit protein uL3m (mrpl9) from Neurospora crassa (strain ATCC 24698 / 74-OR23-1A / CBS 708.71 / DSM 1257 / FGSC 987).